We begin with the raw amino-acid sequence, 594 residues long: Zinc finger protein 467 (594 aa).

The tract at residues 1–70 (MRETLEALNS…HTEQAEAPCM (70 aa)) is disordered. Lys-97 is covalently cross-linked (Glycyl lysine isopeptide (Lys-Gly) (interchain with G-Cter in SUMO2)). 12 consecutive C2H2-type zinc fingers follow at residues 160-182 (YGCE…QRLH), 188-210 (CACP…QRSH), 216-238 (FPCS…LRTH), 244-266 (YPCA…QKTH), 272-294 (FPCT…QRIH), 300-322 (YQCT…QRVH), 355-377 (FACS…QSLH), 430-452 (FFCP…RRVH), 458-480 (FACA…SRAH), 486-508 (FACA…QAVH), 514-536 (HACA…QAIH), and 542-564 (FSCP…QRIH). Residues 313–350 (QHLVRHQRVHDAASRTRSSPDIPATPHPPTASLAPSPT) are disordered. Lys-368 is covalently cross-linked (Glycyl lysine isopeptide (Lys-Gly) (interchain with G-Cter in SUMO2)).

Belongs to the krueppel C2H2-type zinc-finger protein family. In terms of assembly, interacts with STAT3. Enhances STAT3 activity by keeping it in the nucleus.

Its subcellular location is the nucleus. Functionally, transcription factor that promotes adipocyte differentiation and suppresses osteoblast differentiation in the bone marrow. Enhances the osteoclast-supporting ability of stromal cells. Binds with STAT3 the consensus sequence 5'-CTTCTGGGAAGA-3' of the acute phase response element (APRE). Transactivates several promoters including FOS, OSM and PPARG. Recruits a histone deacetylase complex. The chain is Zinc finger protein 467 (Znf467) from Rattus norvegicus (Rat).